The chain runs to 429 residues: Enolase (429 aa).

Position 163 (Gln163) interacts with (2R)-2-phosphoglycerate. The active-site Proton donor is the Glu205. Mg(2+) contacts are provided by Asp242, Glu286, and Asp313. (2R)-2-phosphoglycerate contacts are provided by Lys338, Arg367, Ser368, and Lys389. The active-site Proton acceptor is the Lys338.

The protein belongs to the enolase family. The cofactor is Mg(2+).

It is found in the cytoplasm. Its subcellular location is the secreted. The protein localises to the cell surface. The enzyme catalyses (2R)-2-phosphoglycerate = phosphoenolpyruvate + H2O. The protein operates within carbohydrate degradation; glycolysis; pyruvate from D-glyceraldehyde 3-phosphate: step 4/5. Functionally, catalyzes the reversible conversion of 2-phosphoglycerate (2-PG) into phosphoenolpyruvate (PEP). It is essential for the degradation of carbohydrates via glycolysis. In Thermoanaerobacter pseudethanolicus (strain ATCC 33223 / 39E) (Clostridium thermohydrosulfuricum), this protein is Enolase.